Consider the following 382-residue polypeptide: Solvent efflux pump periplasmic linker SrpA (382 aa).

Positions 1 to 23 (MRQIRSPRALRVIPLTALMLISG) are cleaved as a signal peptide. Cys24 is lipidated: N-palmitoyl cysteine. Residue Cys24 is the site of S-diacylglycerol cysteine attachment. Positions 98–127 (RTYEAQLRRAEANRTSAQNLARRYETLLKT) form a coiled coil.

This sequence belongs to the membrane fusion protein (MFP) (TC 8.A.1) family.

Its subcellular location is the cell inner membrane. Functionally, the periplasmic linker protein component of an organic solvent efflux pump. Involved in export of a number of low log POW compounds including hexane (log POW 3.5), toluene (log POW 2.5) and dimethylphthalate (log POW 2.3). The solvent resistance phenotype has been postulated to depend on the operon expression level. This is Solvent efflux pump periplasmic linker SrpA (srpA) from Pseudomonas putida (Arthrobacter siderocapsulatus).